A 371-amino-acid chain; its full sequence is MRVGIPTETKNNEFRVAITPAGVAELTRRGHEVLIQAGAGEGSAITDADFKAAGAQLVGTADQVWADADLLLKVKEPIAAEYGRLRHGQILFTFLHLAASRACTDALLDSGTTSIAYETVQTPDGALPLLAPMSEVAGRLAAQVGAYHLMRTQGGRGVLMGGVPGVEPADVVVIGAGTAGYNAARIANGMGATVTVLDINIDKLRQLDAEFCGRIHTRYSSAYELEGAVKRADLVIGAVLVPGAKAPKLVSNSLVAHMKPGAVLVDIAIDQGGCFEGSRPTTYDHPTFAVHDTLFYCVANMPASVPKTSTYALTNATMPYVLELADHGWRAACRSNPALAKGLSTHEGALLSERVATDLGVPFTEPASVLA.

Substrate is bound by residues arginine 15 and lysine 75. Histidine 96 (proton donor/acceptor) is an active-site residue. NAD(+)-binding positions include serine 134, 178-179, aspartate 198, lysine 203, serine 220, 239-240, 267-270, arginine 279, and 298-301; these read TA, VL, IAID, and VANM. Catalysis depends on aspartate 270, which acts as the Proton donor/acceptor. Residues glutamate 323 and histidine 327 each contribute to the Mg(2+) site.

It belongs to the AlaDH/PNT family. In terms of assembly, homohexamer. Trimer of dimers. Mg(2+) serves as cofactor.

The protein resides in the secreted. It catalyses the reaction L-alanine + NAD(+) + H2O = pyruvate + NH4(+) + NADH + H(+). It functions in the pathway amino-acid degradation; L-alanine degradation via dehydrogenase pathway; NH(3) and pyruvate from L-alanine: step 1/1. Its function is as follows. Catalyzes the reversible reductive amination of pyruvate to L-alanine. However, since the physiological environment of M.tuberculosis has a neutral pH, it can be assumed that the enzyme catalyzes exclusively the formation of L-alanine. May play a role in cell wall synthesis as L-alanine is an important constituent of the peptidoglycan layer. In Mycobacterium tuberculosis (strain CDC 1551 / Oshkosh), this protein is Alanine dehydrogenase (ald).